The primary structure comprises 282 residues: Putative hydrolase Bcenmc03_4750 (282 aa).

Mg(2+)-binding residues include Glu124, Glu126, and Asp155.

It belongs to the FAH family. Mg(2+) serves as cofactor.

This chain is Putative hydrolase Bcenmc03_4750, found in Burkholderia orbicola (strain MC0-3).